We begin with the raw amino-acid sequence, 543 residues long: Sensor histidine kinase DcuS (543 aa).

The Cytoplasmic portion of the chain corresponds to M1 to T20. The helical transmembrane segment at V21 to F41 threads the bilayer. Residues S42 to W181 are Periplasmic-facing. Residues R107–H110, K121, G140–L142, and R147 contribute to the (R)-malate site. The helical transmembrane segment at S182–V202 threads the bilayer. Topologically, residues N203–R543 are cytoplasmic. The 112-residue stretch at L212 to D323 folds into the PAS domain. The Histidine kinase domain occupies E346–G538. Phosphohistidine; by autocatalysis is present on H349.

As to quaternary structure, homodimer. Autophosphorylated. The phosphoryl group is rapidly transferred to DcuR.

The protein resides in the cell inner membrane. It carries out the reaction ATP + protein L-histidine = ADP + protein N-phospho-L-histidine.. Functionally, member of the two-component regulatory system DcuR/DcuS. Involved in the C4-dicarboxylate-stimulated regulation of the genes encoding the anaerobic fumarate respiratory system (frdABCD; nuoAN; dcuB; sdhCDAB; etc.). Weakly regulates the aerobic C4-dicarboxylate transporter dctA. Activates DcuR by phosphorylation. This is Sensor histidine kinase DcuS (dcuS) from Escherichia coli O6:H1 (strain CFT073 / ATCC 700928 / UPEC).